The following is a 298-amino-acid chain: Protease HtpX homolog (298 aa).

The next 2 membrane-spanning stretches (helical) occupy residues V14 to L34 and Y39 to F59. H143 lines the Zn(2+) pocket. The active site involves E144. Residue H147 participates in Zn(2+) binding. The next 2 membrane-spanning stretches (helical) occupy residues I158–W178 and I197–I217. Residue E226 coordinates Zn(2+).

It belongs to the peptidase M48B family. Requires Zn(2+) as cofactor.

Its subcellular location is the cell membrane. The protein is Protease HtpX homolog of Streptococcus pyogenes serotype M3 (strain SSI-1).